Reading from the N-terminus, the 218-residue chain is Guanylate kinase (218 aa).

The region spanning 15 to 194 (GMMLVLSSPS…SIADVRAILR (180 aa)) is the Guanylate kinase-like domain. ATP is bound at residue 22–29 (SPSGAGKT).

This sequence belongs to the guanylate kinase family.

The protein localises to the cytoplasm. The enzyme catalyses GMP + ATP = GDP + ADP. Its function is as follows. Essential for recycling GMP and indirectly, cGMP. This is Guanylate kinase from Rhodospirillum rubrum (strain ATCC 11170 / ATH 1.1.1 / DSM 467 / LMG 4362 / NCIMB 8255 / S1).